Consider the following 862-residue polypeptide: Rab GTPase-binding effector protein 1 (862 aa).

Alanine 2 carries the post-translational modification N-acetylalanine. Residues aspartate 11–lysine 345 adopt a coiled-coil conformation. An N6-acetyllysine modification is found at lysine 282. The tract at residues glutamate 315–serine 374 is disordered. A compositionally biased stretch (basic and acidic residues) spans lysine 336 to lysine 345. Residues serine 374, serine 377, and serine 407 each carry the phosphoserine modification. At threonine 408 the chain carries Phosphothreonine. Serine 410 is modified (phosphoserine). The stretch at aspartate 534 to glutamine 816 forms a coiled coil.

The protein belongs to the rabaptin family. Heterodimer with RABGEF1. The heterodimer binds RAB4A and RAB5A that have been activated by GTP-binding. Interacts with TSC2. Interacts with GGA1 (via GAE domain), GGA2 (via GAE domain) and GGA3 (via GAE domain). Interacts with AP1G1 (via GAE domain). Interacts with AP1G2 (via GAE domain). Interacts with ECPAS. Interacts with KCNH1. Interacts with PKD1 (via C-terminal domain) and GGA1; the interactions recruit PKD1:PKD2 complex to GGA1 and ARL3 at trans-Golgi network. Interacts with KCNH1. Post-translationally, proteolytic cleavage by caspases in apoptotic cells causes loss of endosome fusion activity.

It localises to the cytoplasm. Its subcellular location is the early endosome. It is found in the recycling endosome. The protein resides in the cytoplasmic vesicle. Its function is as follows. Rab effector protein acting as linker between gamma-adaptin, RAB4A and RAB5A. Involved in endocytic membrane fusion and membrane trafficking of recycling endosomes. Involved in KCNH1 channels trafficking to and from the cell membrane. Stimulates RABGEF1 mediated nucleotide exchange on RAB5A. Mediates the traffic of PKD1:PKD2 complex from the endoplasmic reticulum through the Golgi to the cilium. In Mus musculus (Mouse), this protein is Rab GTPase-binding effector protein 1 (Rabep1).